A 258-amino-acid polypeptide reads, in one-letter code: Putative cysteine-rich repeat secretory protein 35 (258 aa).

A signal peptide spans 1–29 (MYSSYSLSKRLIYVPILAIQFLLVRSVSS). 2 consecutive Gnk2-homologous domains span residues 36-138 (YLNH…TIKP) and 146-255 (FKNT…LYPF).

Belongs to the cysteine-rich repeat secretory protein family.

The protein resides in the secreted. The protein is Putative cysteine-rich repeat secretory protein 35 (CRRSP35) of Arabidopsis thaliana (Mouse-ear cress).